The primary structure comprises 321 residues: uncharacterized protein (321 aa).

This is an uncharacterized protein from Archaeoglobus fulgidus (strain ATCC 49558 / DSM 4304 / JCM 9628 / NBRC 100126 / VC-16).